We begin with the raw amino-acid sequence, 348 residues long: 4-hydroxy-3-methylbut-2-en-1-yl diphosphate synthase (flavodoxin) (348 aa).

The [4Fe-4S] cluster site is built by C263, C266, C298, and E305.

Belongs to the IspG family. [4Fe-4S] cluster serves as cofactor.

The catalysed reaction is (2E)-4-hydroxy-3-methylbut-2-enyl diphosphate + oxidized [flavodoxin] + H2O + 2 H(+) = 2-C-methyl-D-erythritol 2,4-cyclic diphosphate + reduced [flavodoxin]. It participates in isoprenoid biosynthesis; isopentenyl diphosphate biosynthesis via DXP pathway; isopentenyl diphosphate from 1-deoxy-D-xylulose 5-phosphate: step 5/6. Converts 2C-methyl-D-erythritol 2,4-cyclodiphosphate (ME-2,4cPP) into 1-hydroxy-2-methyl-2-(E)-butenyl 4-diphosphate. This Dehalococcoides mccartyi (strain ATCC BAA-2100 / JCM 16839 / KCTC 5957 / BAV1) protein is 4-hydroxy-3-methylbut-2-en-1-yl diphosphate synthase (flavodoxin).